The chain runs to 164 residues: MTVTIEIAVDIPCPAWTEAMPDAEARCGRLAAIALGAVDLPDGVVELSIVLADDATVQGLNRDWRGKDQPTNVLSFASLDDEDAPVVPGAPLLLGDVILAFETCAAEAHDQGKTLADHFSHLVVHGVLHLLGYDHMDDEEAAEMEALETTLLAALGIDDPYGEQ.

Zn(2+) is bound by residues H125, H129, and H135.

The protein belongs to the endoribonuclease YbeY family. Requires Zn(2+) as cofactor.

It is found in the cytoplasm. In terms of biological role, single strand-specific metallo-endoribonuclease involved in late-stage 70S ribosome quality control and in maturation of the 3' terminus of the 16S rRNA. The protein is Endoribonuclease YbeY of Paramagnetospirillum magneticum (strain ATCC 700264 / AMB-1) (Magnetospirillum magneticum).